Consider the following 198-residue polypeptide: Cell division protein SepF (198 aa).

The disordered stretch occupies residues 170–198; it reads EVPQPPARPARPASTNPPAWGNETNRMAQ. The segment covering 179 to 188 has biased composition (low complexity); that stretch reads ARPASTNPPA.

It belongs to the SepF family. Homodimer. Interacts with FtsZ.

Its subcellular location is the cytoplasm. Its function is as follows. Cell division protein that is part of the divisome complex and is recruited early to the Z-ring. Probably stimulates Z-ring formation, perhaps through the cross-linking of FtsZ protofilaments. Its function overlaps with FtsA. In Trichormus variabilis (strain ATCC 29413 / PCC 7937) (Anabaena variabilis), this protein is Cell division protein SepF.